Reading from the N-terminus, the 547-residue chain is CTP synthase (547 aa).

The interval 1–273 (MNNKKLKSKF…DHFILNHFQL (273 aa)) is amidoligase domain. Residue Ser-19 participates in CTP binding. Ser-19 is a UTP binding site. An ATP-binding site is contributed by 20–25 (SLGKGI). Tyr-60 is a binding site for L-glutamine. An ATP-binding site is contributed by Asp-77. Mg(2+)-binding residues include Asp-77 and Glu-147. CTP-binding positions include 154–156 (DIE), 194–199 (KTKPTQ), and Lys-230. Residues 194-199 (KTKPTQ) and Lys-230 contribute to the UTP site. The 234-residue stretch at 306 to 539 (YVILHDAYLS…VEAALLKNGK (234 aa)) folds into the Glutamine amidotransferase type-1 domain. Gly-361 is a binding site for L-glutamine. Cys-388 functions as the Nucleophile; for glutamine hydrolysis in the catalytic mechanism. Residues 389–392 (FGMQ), Glu-412, and Arg-466 contribute to the L-glutamine site. Catalysis depends on residues His-512 and Glu-514.

This sequence belongs to the CTP synthase family. Homotetramer.

The catalysed reaction is UTP + L-glutamine + ATP + H2O = CTP + L-glutamate + ADP + phosphate + 2 H(+). The enzyme catalyses L-glutamine + H2O = L-glutamate + NH4(+). It catalyses the reaction UTP + NH4(+) + ATP = CTP + ADP + phosphate + 2 H(+). It participates in pyrimidine metabolism; CTP biosynthesis via de novo pathway; CTP from UDP: step 2/2. Allosterically activated by GTP, when glutamine is the substrate; GTP has no effect on the reaction when ammonia is the substrate. The allosteric effector GTP functions by stabilizing the protein conformation that binds the tetrahedral intermediate(s) formed during glutamine hydrolysis. Inhibited by the product CTP, via allosteric rather than competitive inhibition. Functionally, catalyzes the ATP-dependent amination of UTP to CTP with either L-glutamine or ammonia as the source of nitrogen. Regulates intracellular CTP levels through interactions with the four ribonucleotide triphosphates. The sequence is that of CTP synthase from Phytoplasma australiense.